Consider the following 219-residue polypeptide: Probable nicotinate-nucleotide adenylyltransferase (219 aa).

It belongs to the NadD family.

The enzyme catalyses nicotinate beta-D-ribonucleotide + ATP + H(+) = deamido-NAD(+) + diphosphate. The protein operates within cofactor biosynthesis; NAD(+) biosynthesis; deamido-NAD(+) from nicotinate D-ribonucleotide: step 1/1. Catalyzes the reversible adenylation of nicotinate mononucleotide (NaMN) to nicotinic acid adenine dinucleotide (NaAD). This is Probable nicotinate-nucleotide adenylyltransferase from Pseudomonas putida (strain GB-1).